The chain runs to 353 residues: tRNA-specific 2-thiouridylase MnmA 2 (353 aa).

ATP-binding positions include 9 to 16 (AMSGGVDS) and Met-35. The active-site Nucleophile is Cys-98. Cys-98 and Cys-194 are oxidised to a cystine. Gly-122 serves as a coordination point for ATP. The interaction with tRNA stretch occupies residues 144 to 146 (KDQ). The active-site Cysteine persulfide intermediate is Cys-194. The interval 300-301 (RY) is interaction with tRNA.

The protein belongs to the MnmA/TRMU family.

The protein localises to the cytoplasm. It catalyses the reaction S-sulfanyl-L-cysteinyl-[protein] + uridine(34) in tRNA + AH2 + ATP = 2-thiouridine(34) in tRNA + L-cysteinyl-[protein] + A + AMP + diphosphate + H(+). Functionally, catalyzes the 2-thiolation of uridine at the wobble position (U34) of tRNA, leading to the formation of s(2)U34. The protein is tRNA-specific 2-thiouridylase MnmA 2 of Clostridium botulinum (strain Loch Maree / Type A3).